The primary structure comprises 182 residues: Large ribosomal subunit protein bL25 (182 aa).

Belongs to the bacterial ribosomal protein bL25 family. CTC subfamily. As to quaternary structure, part of the 50S ribosomal subunit; part of the 5S rRNA/L5/L18/L25 subcomplex. Contacts the 5S rRNA. Binds to the 5S rRNA independently of L5 and L18.

Its function is as follows. This is one of the proteins that binds to the 5S RNA in the ribosome where it forms part of the central protuberance. This is Large ribosomal subunit protein bL25 from Borrelia hermsii (strain HS1 / DAH).